The sequence spans 438 residues: Glutamyl-tRNA(Gln) amidotransferase subunit D (438 aa).

Positions 92-422 (PEVTIIGTGG…EEVRKMMLTN (331 aa)) constitute an Asparaginase/glutaminase domain. Active-site residues include Thr102, Thr178, Asp179, and Lys256.

This sequence belongs to the asparaginase 1 family. GatD subfamily. In terms of assembly, heterodimer of GatD and GatE.

The enzyme catalyses L-glutamyl-tRNA(Gln) + L-glutamine + ATP + H2O = L-glutaminyl-tRNA(Gln) + L-glutamate + ADP + phosphate + H(+). In terms of biological role, allows the formation of correctly charged Gln-tRNA(Gln) through the transamidation of misacylated Glu-tRNA(Gln) in organisms which lack glutaminyl-tRNA synthetase. The reaction takes place in the presence of glutamine and ATP through an activated gamma-phospho-Glu-tRNA(Gln). The GatDE system is specific for glutamate and does not act on aspartate. The protein is Glutamyl-tRNA(Gln) amidotransferase subunit D of Pyrococcus abyssi (strain GE5 / Orsay).